The primary structure comprises 141 residues: Galactose-6-phosphate isomerase subunit LacA (141 aa).

It belongs to the LacAB/RpiB family. As to quaternary structure, heteromultimeric protein consisting of LacA and LacB.

The catalysed reaction is aldehydo-D-galactose 6-phosphate = keto-D-tagatose 6-phosphate. It functions in the pathway carbohydrate metabolism; D-galactose 6-phosphate degradation; D-tagatose 6-phosphate from D-galactose 6-phosphate: step 1/1. This chain is Galactose-6-phosphate isomerase subunit LacA, found in Streptococcus pneumoniae serotype 2 (strain D39 / NCTC 7466).